The primary structure comprises 296 residues: Protoheme IX farnesyltransferase (296 aa).

9 consecutive transmembrane segments (helical) span residues Ile-14 to Ile-34, Tyr-36 to Phe-56, Val-75 to Ile-95, Leu-99 to Ile-119, Val-133 to Ala-153, Leu-163 to Phe-183, Ile-209 to Ala-229, Leu-234 to Ala-254, and Phe-265 to Val-285.

This sequence belongs to the UbiA prenyltransferase family. Protoheme IX farnesyltransferase subfamily.

Its subcellular location is the cell inner membrane. It catalyses the reaction heme b + (2E,6E)-farnesyl diphosphate + H2O = Fe(II)-heme o + diphosphate. The protein operates within porphyrin-containing compound metabolism; heme O biosynthesis; heme O from protoheme: step 1/1. Converts heme B (protoheme IX) to heme O by substitution of the vinyl group on carbon 2 of heme B porphyrin ring with a hydroxyethyl farnesyl side group. The sequence is that of Protoheme IX farnesyltransferase from Yersinia enterocolitica serotype O:8 / biotype 1B (strain NCTC 13174 / 8081).